The primary structure comprises 776 residues: V-set and immunoglobulin domain-containing protein 10-like 2 (776 aa).

Positions 1–28 (MVGLSAHHRPLGCRLLILFCLLHPGASG) are cleaved as a signal peptide. Ig-like domains are found at residues 32-140 (PTSN…LYLM), 150-234 (PRVQ…AFLD), 242-324 (PVIT…TTVQ), 399-498 (PTLA…LRLE), and 500-592 (PQLT…VLLE). 5 disulfides stabilise this stretch: Cys56/Cys122, Cys169/Cys217, Cys268/Cys308, Cys435/Cys480, and Cys521/Cys576. A Fibronectin type-III domain is found at 608-708 (TPPNVTISRL…EVKTPVDPAF (101 aa)). Residues Asn611 and Asn637 are each glycosylated (N-linked (GlcNAc...) asparagine). A helical transmembrane segment spans residues 713 to 733 (AVLGAAGTGVVVALATSLLVF).

It localises to the membrane. In Mus musculus (Mouse), this protein is V-set and immunoglobulin domain-containing protein 10-like 2.